The sequence spans 431 residues: Probable pectate lyase 1 (431 aa).

Residues 1–20 form the signal peptide; that stretch reads MAVLPTWLLAMMCLLFFVGA. Residues N23, N28, and N65 are each glycosylated (N-linked (GlcNAc...) asparagine). 3 residues coordinate Ca(2+): D227, D251, and D255. The active site involves R307.

The protein belongs to the polysaccharide lyase 1 family. Ca(2+) is required as a cofactor. Expressed in flowers, but not in leaves.

The catalysed reaction is Eliminative cleavage of (1-&gt;4)-alpha-D-galacturonan to give oligosaccharides with 4-deoxy-alpha-D-galact-4-enuronosyl groups at their non-reducing ends.. It participates in glycan metabolism; pectin degradation; 2-dehydro-3-deoxy-D-gluconate from pectin: step 2/5. The chain is Probable pectate lyase 1 from Arabidopsis thaliana (Mouse-ear cress).